The primary structure comprises 109 residues: Flowering-promoting factor 1-like protein 1 (109 aa).

The D-box signature appears at Arg-73–Leu-81.

It belongs to the FPF1 family. As to quaternary structure, interacts with RPT4. Ubiquitinated. RPT4 mediates its proteasome-dependent degradation. As to expression, specifically expressed in the apical meristem, the elongation zone of root tip, steles of the branch zone, and the young lateral root. Also expressed in spikes. Expressed in roots and spikes (at protein level).

The protein localises to the cytoplasm. The protein resides in the nucleus. Its function is as follows. GTP-binding protein that functions in the development of root systems, which are mediated by auxin. Acts as a cell cycle regulator during root development. Proteasome-mediated degradation of the protein is necessary for the transition of metaphase to anaphase in mitosis. The chain is Flowering-promoting factor 1-like protein 1 (RAA1) from Oryza sativa subsp. japonica (Rice).